We begin with the raw amino-acid sequence, 427 residues long: Adenylosuccinate synthetase (427 aa).

Residues 12 to 18 (GDEGKGK) and 40 to 42 (GHT) each bind GTP. The Proton acceptor role is filled by Asp-13. Asp-13 and Gly-40 together coordinate Mg(2+). Residues 13–16 (DEGK), 38–41 (NAGH), Thr-128, Arg-142, Gln-223, Thr-238, and Arg-302 contribute to the IMP site. Catalysis depends on His-41, which acts as the Proton donor. Position 298–304 (298–304 (TTTGRPR)) interacts with substrate. Residues Arg-304, 330–332 (SID), and 412–414 (SVG) contribute to the GTP site.

It belongs to the adenylosuccinate synthetase family. In terms of assembly, homodimer. Requires Mg(2+) as cofactor.

Its subcellular location is the cytoplasm. The catalysed reaction is IMP + L-aspartate + GTP = N(6)-(1,2-dicarboxyethyl)-AMP + GDP + phosphate + 2 H(+). It functions in the pathway purine metabolism; AMP biosynthesis via de novo pathway; AMP from IMP: step 1/2. Its function is as follows. Plays an important role in the de novo pathway of purine nucleotide biosynthesis. Catalyzes the first committed step in the biosynthesis of AMP from IMP. The polypeptide is Adenylosuccinate synthetase (Staphylococcus aureus (strain MW2)).